The chain runs to 433 residues: Glutamate-1-semialdehyde 2,1-aminomutase (433 aa).

The residue at position 265 (Lys265) is an N6-(pyridoxal phosphate)lysine.

It belongs to the class-III pyridoxal-phosphate-dependent aminotransferase family. HemL subfamily. In terms of assembly, homodimer. The cofactor is pyridoxal 5'-phosphate.

Its subcellular location is the cytoplasm. It catalyses the reaction (S)-4-amino-5-oxopentanoate = 5-aminolevulinate. Its pathway is porphyrin-containing compound metabolism; protoporphyrin-IX biosynthesis; 5-aminolevulinate from L-glutamyl-tRNA(Glu): step 2/2. The polypeptide is Glutamate-1-semialdehyde 2,1-aminomutase (Shewanella denitrificans (strain OS217 / ATCC BAA-1090 / DSM 15013)).